We begin with the raw amino-acid sequence, 773 residues long: FT-interacting protein 3 (773 aa).

Basic and acidic residues predominate over residues 1-16 (MQRPPPEDFSLKETRP). A disordered region spans residues 1–24 (MQRPPPEDFSLKETRPHLGGGKLS). 3 C2 domains span residues 22–142 (KLSG…PQWY), 181–305 (VSGT…SRWY), and 345–471 (YSSD…THSY). Residues Asp-55, Asp-61, Asp-108, Asp-110, and Asp-115 each coordinate Ca(2+). 3 consecutive transmembrane segments (helical) span residues 574 to 594 (IMGV…ICNW), 608 to 628 (IILV…LFLI), and 716 to 736 (LFVL…FQVV).

The protein belongs to the MCTP family. As to quaternary structure, interacts with and regulates subcellular localization and trafficking of STM. The cofactor is Ca(2+). In terms of tissue distribution, accumulates in vascular tissues, leaf primordia and flowers. Highly expressed in roots meristems and in both vegetative and inflorescence shoot apical meristems (SAMs).

The protein localises to the endoplasmic reticulum membrane. The protein resides in the cytoplasm. It localises to the vesicle. It is found in the cell membrane. Its subcellular location is the endosome membrane. The protein localises to the golgi apparatus membrane. In terms of biological role, required for proliferation and differentiation of shoot stem cells in the shoot apical meristem (SAM), thus determining the appropriate balance between the maintenance of shoot stem cells and their differentiation into other aboveground plant parts via the control of subcellular localization and intercellular trafficking of STM in the shoot apex. Prevents intracellular trafficking of STM to the plasma membrane in cells in the peripheral shoot meristem region thus facilitating STM recycling to the nucleus to maintain stem cells. May function as a signaling molecule by regulating the trafficking of other regulators. This Arabidopsis thaliana (Mouse-ear cress) protein is FT-interacting protein 3.